Reading from the N-terminus, the 58-residue chain is Protein translocase subunit SecE (58 aa).

The chain crosses the membrane as a helical span at residues 36-56 (ILLIGFIGFLMFAIMSLLPGV).

The protein belongs to the SecE/SEC61-gamma family. Component of the Sec protein translocase complex. Heterotrimer consisting of SecY (alpha), SecG (beta) and SecE (gamma) subunits. The heterotrimers can form oligomers, although 1 heterotrimer is thought to be able to translocate proteins. Interacts with the ribosome. May interact with SecDF, and other proteins may be involved.

The protein resides in the cell membrane. In terms of biological role, essential subunit of the Sec protein translocation channel SecYEG. Clamps together the 2 halves of SecY. May contact the channel plug during translocation. The protein is Protein translocase subunit SecE of Halorubrum lacusprofundi (strain ATCC 49239 / DSM 5036 / JCM 8891 / ACAM 34).